Reading from the N-terminus, the 289-residue chain is Tachykinins (289 aa).

The signal sequence occupies residues 1–24; that stretch reads MRSQGGSFAVALLLLLLLTAAATA. A propeptide spanning residues 25 to 49 is cleaved from the precursor; sequence ADAEPDVESSVSTLPPGADAPRRMV. Residues 28-80 are disordered; the sequence is EPDVESSVSTLPPGADAPRRMVKRAPTSSFIGMRGKKEDEKDQRAADWMGPDP. At arginine 61 the chain carries Arginine amide. Over residues 62–72 the composition is skewed to basic and acidic residues; that stretch reads GKKEDEKDQRA. Residue asparagine 95 is modified to Asparagine amide. Position 110 is an arginine amide (arginine 110). Valine 155 bears the Valine amide mark. The tract at residues 156–175 is disordered; that stretch reads GKRAPTGFTGMRGKRPMSGD. Arginine amide is present on residues arginine 167, arginine 198, arginine 237, and arginine 281. A propeptide spanning residues 285–289 is cleaved from the precursor; sequence PALAE.

Belongs to the tachykinin family.

The protein resides in the secreted. Its function is as follows. Tachykinins are active peptides which excite neurons, evoke behavioral responses, are potent vasodilators and secretagogues, and contract (directly or indirectly) many smooth muscles. Stimulates gut muscle contractions. The sequence is that of Tachykinins from Drosophila pseudoobscura pseudoobscura (Fruit fly).